The primary structure comprises 430 residues: Enolase (430 aa).

Gln-163 contacts (2R)-2-phosphoglycerate. Glu-205 (proton donor) is an active-site residue. Mg(2+)-binding residues include Asp-242, Glu-288, and Asp-315. (2R)-2-phosphoglycerate-binding residues include Lys-340, Arg-369, Ser-370, and Lys-391. The active-site Proton acceptor is Lys-340.

The protein belongs to the enolase family. Mg(2+) is required as a cofactor.

It is found in the cytoplasm. Its subcellular location is the secreted. The protein resides in the cell surface. It catalyses the reaction (2R)-2-phosphoglycerate = phosphoenolpyruvate + H2O. It functions in the pathway carbohydrate degradation; glycolysis; pyruvate from D-glyceraldehyde 3-phosphate: step 4/5. Its function is as follows. Catalyzes the reversible conversion of 2-phosphoglycerate (2-PG) into phosphoenolpyruvate (PEP). It is essential for the degradation of carbohydrates via glycolysis. The protein is Enolase of Aster yellows witches'-broom phytoplasma (strain AYWB).